Reading from the N-terminus, the 749-residue chain is Catalase-peroxidase 2 (749 aa).

An N-terminal signal peptide occupies residues 1-27 (MFKRTIPLFAAFTLAISPSIFPNYAHA). Residues 107–229 (WHAAGTYRIY…LAATVMGLIY (123 aa)) constitute a cross-link (tryptophyl-tyrosyl-methioninium (Trp-Tyr) (with M-255)). The Proton acceptor role is filled by His108. Positions 229–255 (YVNPEGPNGVPDPLAAAEKIRETFGRM) form a cross-link, tryptophyl-tyrosyl-methioninium (Tyr-Met) (with W-107). His270 lines the heme b pocket.

It belongs to the peroxidase family. Peroxidase/catalase subfamily. As to quaternary structure, homodimer or homotetramer. Heme b is required as a cofactor. Formation of the three residue Trp-Tyr-Met cross-link is important for the catalase, but not the peroxidase activity of the enzyme.

The catalysed reaction is H2O2 + AH2 = A + 2 H2O. The enzyme catalyses 2 H2O2 = O2 + 2 H2O. Bifunctional enzyme with both catalase and broad-spectrum peroxidase activity. The chain is Catalase-peroxidase 2 from Legionella pneumophila subsp. pneumophila (strain Philadelphia 1 / ATCC 33152 / DSM 7513).